The following is a 167-amino-acid chain: Small ribosomal subunit protein uS5 (167 aa).

Positions 11–74 (LQEKLIAVNR…EKARRNMINV (64 aa)) constitute an S5 DRBM domain.

The protein belongs to the universal ribosomal protein uS5 family. As to quaternary structure, part of the 30S ribosomal subunit. Contacts proteins S4 and S8.

Its function is as follows. With S4 and S12 plays an important role in translational accuracy. In terms of biological role, located at the back of the 30S subunit body where it stabilizes the conformation of the head with respect to the body. This chain is Small ribosomal subunit protein uS5, found in Escherichia coli O139:H28 (strain E24377A / ETEC).